A 152-amino-acid polypeptide reads, in one-letter code: Chemokine-like factor (152 aa).

One can recognise an MARVEL domain in the interval 13–133 (FCFSVKGHVK…DGALIYRKLL (121 aa)). Transmembrane regions (helical) follow at residues 45–65 (YIVI…LYVL), 81–101 (IINS…ALIP), and 108–128 (VGGG…GALI).

Belongs to the chemokine-like factor family. As to expression, isoform 1, isoform 2, isoform 3 and isoform 4 have highest expression levels in adult spleen, lung, testis, ovary, peripheral blood leukocyte, placenta, pancreas, and in fetal brain, skeletal muscle, thymus and heart. Lower expression levels in adult skeletal muscle, liver, thymus colon, prostate and fetal spleen and liver.

The protein resides in the secreted. Its subcellular location is the membrane. With respect to regulation, partly inhibited by interleukin 10. In terms of biological role, may play an important role in inflammation and regeneration of skeletal muscle. Essential for embryonic development. Functionally, has chemotactic response in monocytes, neutrophils and lymphocytes. Binds CCR4. In Homo sapiens (Human), this protein is Chemokine-like factor (CKLF).